The sequence spans 953 residues: Isoleucine--tRNA ligase (953 aa).

A 'HIGH' region motif is present at residues 58 to 68; that stretch reads PYANGSIHIGH. Glu577 serves as a coordination point for L-isoleucyl-5'-AMP. A 'KMSKS' region motif is present at residues 618–622; it reads KMSKS. Lys621 provides a ligand contact to ATP. Cys916, Cys919, Cys936, and Cys939 together coordinate Zn(2+).

It belongs to the class-I aminoacyl-tRNA synthetase family. IleS type 1 subfamily. In terms of assembly, monomer. It depends on Zn(2+) as a cofactor.

The protein resides in the cytoplasm. The enzyme catalyses tRNA(Ile) + L-isoleucine + ATP = L-isoleucyl-tRNA(Ile) + AMP + diphosphate. Functionally, catalyzes the attachment of isoleucine to tRNA(Ile). As IleRS can inadvertently accommodate and process structurally similar amino acids such as valine, to avoid such errors it has two additional distinct tRNA(Ile)-dependent editing activities. One activity is designated as 'pretransfer' editing and involves the hydrolysis of activated Val-AMP. The other activity is designated 'posttransfer' editing and involves deacylation of mischarged Val-tRNA(Ile). The polypeptide is Isoleucine--tRNA ligase (Aeromonas hydrophila subsp. hydrophila (strain ATCC 7966 / DSM 30187 / BCRC 13018 / CCUG 14551 / JCM 1027 / KCTC 2358 / NCIMB 9240 / NCTC 8049)).